A 404-amino-acid chain; its full sequence is S-adenosylmethionine synthase (404 aa).

Glycine 141 to aspartate 146 provides a ligand contact to ATP.

Belongs to the AdoMet synthase 2 family. Requires Mg(2+) as cofactor.

It catalyses the reaction L-methionine + ATP + H2O = S-adenosyl-L-methionine + phosphate + diphosphate. Its pathway is amino-acid biosynthesis; S-adenosyl-L-methionine biosynthesis; S-adenosyl-L-methionine from L-methionine: step 1/1. Catalyzes the formation of S-adenosylmethionine from methionine and ATP. The protein is S-adenosylmethionine synthase of Methanococcus vannielii (strain ATCC 35089 / DSM 1224 / JCM 13029 / OCM 148 / SB).